Reading from the N-terminus, the 116-residue chain is Transmembrane protein 213 (116 aa).

Residues 1 to 35 (MAQSGVFLRNPGHLTSAPQAALLFSLVLTSFHLSC) form the signal peptide. Residues 36 to 79 (GTETSSSNSTLSAHHPDPGTLEQCANVDFCPLASLCCRASVDEY) are Extracellular-facing. A helical membrane pass occupies residues 80–100 (GWIAAAVGWSFWFLTLILLCV). The Cytoplasmic segment spans residues 101–116 (DKLMKLTPEEPKDLAA).

Its subcellular location is the membrane. This Mus musculus (Mouse) protein is Transmembrane protein 213 (Tmem213).